The following is a 145-amino-acid chain: Hemoglobin subunit beta (145 aa).

Residues 1 to 145 (MLTSEEKAAV…VANALAHRYH (145 aa)) enclose the Globin domain. Thr11 carries the post-translational modification Phosphothreonine. Lys58 is modified (N6-acetyllysine). Position 62 (His62) interacts with heme b. Lys81 bears the N6-acetyllysine mark. Heme b is bound at residue His91. Cys92 carries the post-translational modification S-nitrosocysteine.

The protein belongs to the globin family. Heterotetramer of two alpha chains and two beta chains. In terms of tissue distribution, red blood cells.

Functionally, involved in oxygen transport from the lung to the various peripheral tissues. This is Hemoglobin subunit beta (HBB) from Rangifer tarandus (Reindeer).